Consider the following 312-residue polypeptide: Malate dehydrogenase (312 aa).

NAD(+)-binding positions include 12–17 (GAGFTG) and Asp36. Substrate is bound by residues Arg87 and Arg93. NAD(+) contacts are provided by residues Asn100 and 123–125 (LTN). Asn125 is a binding site for substrate. A Phosphoserine modification is found at Ser149. Arg156 contributes to the substrate binding site. His180 functions as the Proton acceptor in the catalytic mechanism.

This sequence belongs to the LDH/MDH superfamily. MDH type 3 family.

It catalyses the reaction (S)-malate + NAD(+) = oxaloacetate + NADH + H(+). Catalyzes the reversible oxidation of malate to oxaloacetate. This is Malate dehydrogenase from Geobacillus kaustophilus (strain HTA426).